The sequence spans 205 residues: UPF0548 protein At2g17695 (205 aa).

It belongs to the UPF0548 family.

The chain is UPF0548 protein At2g17695 from Arabidopsis thaliana (Mouse-ear cress).